We begin with the raw amino-acid sequence, 608 residues long: RAS guanyl-releasing protein 2 (608 aa).

The 123-residue stretch at 4-126 folds into the N-terminal Ras-GEF domain; it reads TLDLDKGCTV…SLIDIESVPT (123 aa). Phosphoserine is present on residues Ser116, Ser117, and Ser147. The Ras-GEF domain maps to 154–387; it reads EPMELAEHLT…YQLSLQREPR (234 aa). Residues 382-405 are disordered; that stretch reads LQREPRSKSSPTSPTSCTPPPRPP. EF-hand domains follow at residues 426–461 and 463–490; these read HIEK…FPYL and AFGD…SSSV. Ca(2+) contacts are provided by Asp439, Asp441, Asp443, His445, Glu450, Asp468, Asn470, Asp472, Cys474, and Glu479. The segment at 498–548 adopts a Phorbol-ester/DAG-type zinc-finger fold; it reads VHNLQESNSLRPVACRHCKALILGIYKQGLKCRACGVNCHKQCKDRLSVEC. Phosphoserine is present on residues Ser554 and Ser575. A disordered region spans residues 555–596; sequence VSLEGSAPSPSPTHTHHRAFSFSLPRPGRRSSRPPEIREEEV.

Belongs to the RASGRP family. Forms a signaling complex with RAP1 and BRAF. Interacts with F-actin. Interacts with RAP1. As to expression, expressed in striatal neurons (at protein level). Expressed in the hematopoietic system. Detected in olfactory structures and deep cortical layers of brain.

The protein localises to the cytoplasm. It is found in the cytosol. It localises to the cell membrane. Its subcellular location is the synapse. The protein resides in the synaptosome. The protein localises to the cell projection. It is found in the ruffle membrane. In terms of biological role, functions as a calcium- and DAG-regulated nucleotide exchange factor specifically activating Rap through the exchange of bound GDP for GTP. May also activate other GTPases such as RRAS, RRAS2, NRAS, KRAS but not HRAS. Functions in aggregation of platelets and adhesion of T-lymphocytes and neutrophils probably through inside-out integrin activation. May function in the muscarinic acetylcholine receptor M1/CHRM1 signaling pathway. This chain is RAS guanyl-releasing protein 2 (Rasgrp2), found in Rattus norvegicus (Rat).